We begin with the raw amino-acid sequence, 119 residues long: MDYEFLRDVTGQVIVRMSMGHEAIGHWFNEEVKGQLTVLTDVEDGARSVAGSERQWRRVGHEYTLLLDEEEVMVQANQLSFTTDELEEGMSYYDEESLSLCGLDDFLTLVEKYREFILH.

Belongs to the UPF0231 family.

The polypeptide is UPF0231 protein ECA3777 (Pectobacterium atrosepticum (strain SCRI 1043 / ATCC BAA-672) (Erwinia carotovora subsp. atroseptica)).